Consider the following 122-residue polypeptide: Fluoride-specific ion channel FluC (122 aa).

The next 4 membrane-spanning stretches (helical) occupy residues 4–24 (LAVL…SIFI), 33–53 (LGTM…SIYL), 66–86 (LLIT…LEGI), and 95–115 (LKAF…VALG). Glycine 73 and threonine 76 together coordinate Na(+).

The protein belongs to the fluoride channel Fluc/FEX (TC 1.A.43) family.

Its subcellular location is the cell inner membrane. It catalyses the reaction fluoride(in) = fluoride(out). With respect to regulation, na(+) is not transported, but it plays an essential structural role and its presence is essential for fluoride channel function. Fluoride-specific ion channel. Important for reducing fluoride concentration in the cell, thus reducing its toxicity. This Hydrogenobaculum sp. (strain Y04AAS1) protein is Fluoride-specific ion channel FluC.